Reading from the N-terminus, the 568-residue chain is Nitrite reductase (568 aa).

Positions 1–25 (MPFGKPLVGTLLASLTLLGLATAHA) are cleaved as a signal peptide. An N-terminal tail region spans residues 26–54 (KDDMKAAEQYQGAASAVDPAHVVRTNGAP). Residues 55–140 (DMSESEFNEA…AKYIQHTPPQ (86 aa)) form the Cytochrome c domain. Positions 72, 75, 76, 96, 109, and 113 each coordinate heme c. The segment at 141-568 (PPEWGMPEMR…NVYNTQHDVY (428 aa)) is D1-heme domain. Residues H207, R250, S251, Y270, R397, and Q508 each coordinate heme d1.

Homodimer. Heme c serves as cofactor. Heme is required as a cofactor.

It localises to the periplasm. The enzyme catalyses nitric oxide + Fe(III)-[cytochrome c] + H2O = Fe(II)-[cytochrome c] + nitrite + 2 H(+). The catalysed reaction is A + NH4(+) + H2O = hydroxylamine + AH2 + H(+). In Pseudomonas aeruginosa (strain ATCC 15692 / DSM 22644 / CIP 104116 / JCM 14847 / LMG 12228 / 1C / PRS 101 / PAO1), this protein is Nitrite reductase (nirS).